Here is a 306-residue protein sequence, read N- to C-terminus: Abnormal cell migration protein 21 (306 aa).

TSP type-1 domains are found at residues 55–102 (PGGW…AISS) and 109–155 (FGSW…DECP). C-linked (Man) tryptophan glycosylation is found at tryptophan 58 and tryptophan 61. 3 cysteine pairs are disulfide-bonded: cysteine 121–cysteine 149, cysteine 123–cysteine 154, and cysteine 134–cysteine 139. The chain crosses the membrane as a helical span at residues 240–260 (CLPLHFAIPIFCFCILTGFLL).

Glycosylated via C-mannosylation by dpy-19 at Trp-58 and Trp-61.

It is found in the membrane. Required for determination of left/right asymmetry in nervous system. Acts together with unc-40 to control an initial left-right asymmetric polarization of the Q neuroblasts. Mig-21 and unc-40 may control the asymmetry in Wnt signaling response by restricting posterior polarization to one of the 2 Q neuroblasts. Involved in left-side QL posterior migration. In right-side QR, unc-40 and mig-21 pathways mutually inhibit each other in posterior migration, allowing anterior QR migration. In Caenorhabditis elegans, this protein is Abnormal cell migration protein 21 (mig-21).